Reading from the N-terminus, the 402-residue chain is UPF0261 protein mll9388 (402 aa).

Belongs to the UPF0261 family.

The chain is UPF0261 protein mll9388 from Mesorhizobium japonicum (strain LMG 29417 / CECT 9101 / MAFF 303099) (Mesorhizobium loti (strain MAFF 303099)).